Reading from the N-terminus, the 370-residue chain is Heme A synthase (370 aa).

The next 8 helical transmembrane spans lie at V15–A35, V104–P124, A129–A149, V161–L181, A200–L220, Q261–I280, G293–L313, and P317–L337. H264 contacts heme. Position 324 (H324) interacts with heme.

This sequence belongs to the COX15/CtaA family. Type 2 subfamily. Interacts with CtaB. The cofactor is heme b.

The protein resides in the cell membrane. It carries out the reaction Fe(II)-heme o + 2 A + H2O = Fe(II)-heme a + 2 AH2. The protein operates within porphyrin-containing compound metabolism; heme A biosynthesis; heme A from heme O: step 1/1. Catalyzes the conversion of heme O to heme A by two successive hydroxylations of the methyl group at C8. The first hydroxylation forms heme I, the second hydroxylation results in an unstable dihydroxymethyl group, which spontaneously dehydrates, resulting in the formyl group of heme A. The sequence is that of Heme A synthase from Rhodopseudomonas palustris (strain TIE-1).